A 334-amino-acid polypeptide reads, in one-letter code: Cytochrome c551 peroxidase (334 aa).

A signal peptide spans 1-26 (MIKRTLTVSLLSLSLGAMFASAGVMA). Heme c is bound by residues C65, C68, H69, C209, C212, H213, H270, and M284. The interval 315 to 334 (FKLPILPPSNNDTPRSQPYE) is disordered. The segment covering 322–334 (PSNNDTPRSQPYE) has biased composition (polar residues).

In terms of processing, binds 2 heme c groups covalently per subunit.

It localises to the periplasm. The catalysed reaction is 2 Fe(II)-[cytochrome c] + H2O2 + 2 H(+) = 2 Fe(III)-[cytochrome c] + 2 H2O. This Nitrosomonas europaea (strain ATCC 19718 / CIP 103999 / KCTC 2705 / NBRC 14298) protein is Cytochrome c551 peroxidase (ccp).